The primary structure comprises 439 residues: Probable E3 ubiquitin-protein ligase makorin-1 (439 aa).

3 C3H1-type zinc fingers span residues 18-45 (WTKHVTCRYFMHGLCKEGENCRYSHDLS), 48-74 (KQTMICKFFQKGCCAFGDRCRYEHTKP), and 163-190 (EMKKQLCPYAAVGECRYGLNCAYLHGDV). The tract at residues 73 to 118 (KPSKQDEVPSSKPSMPLTAAPLAGTPEPVSDGPGGTTGAQEKPQGS) is disordered. The segment at 191 to 218 (CDMCGLQVLHPSDTSQRSQHIRACIEAH) is makorin-type Cys-His. An RING-type zinc finger spans residues 236–290 (CGVCMEVVFEKTNPSERRFGILSNCCHCYCLKCIRKWRSAKQFESKIIKSCPECR). The C3H1-type 4 zinc-finger motif lies at 319-348 (GMGTKPCRYFDEGRGTCPFGANCFYKHAFP). The interval 352 to 371 (LEEPQPQRRQNGSNGRNRNT) is disordered. Residues 358–368 (QRRQNGSNGRN) show a composition bias toward low complexity.

It carries out the reaction S-ubiquitinyl-[E2 ubiquitin-conjugating enzyme]-L-cysteine + [acceptor protein]-L-lysine = [E2 ubiquitin-conjugating enzyme]-L-cysteine + N(6)-ubiquitinyl-[acceptor protein]-L-lysine.. It participates in protein modification; protein ubiquitination. E3 ubiquitin ligase catalyzing the covalent attachment of ubiquitin moieties onto substrate proteins. The protein is Probable E3 ubiquitin-protein ligase makorin-1 of Danio rerio (Zebrafish).